Reading from the N-terminus, the 335-residue chain is MPSFRPNISNDLDTIIFECNSNYDTIVEVTKWFLQIAYLIPGGILNILLLYTILFKNSEIYASSSFFLIYSTDCFVSFSMIFLDIIGRTLVYFTPLCPIIAPMFYEPLIGFKIMMIVLHHSRACKSLIQILLVVNRMSCVIYPIRYGKMWMRPLKYLIILVFVIPFSIDWNLIISRVYMQPTFGGIYMEYIKKVAWASQSRFQLIFITIALLFTIVCTSVIFYTLVMLPKRLRNVERTLSLGTAYISMSFIILVVFQFLFAFYSDIFTTSTIFGYSLLSYDILNVGSPIIMHCVSSKLRNHVLRGSRKLSSAARVVPVSNVTSTNGWVNLIVITL.

7 consecutive transmembrane segments (helical) span residues 33–53 (FLQIAYLIPGGILNILLLYTI), 66–86 (FFLIYSTDCFVSFSMIFLDII), 98–118 (PIIAPMFYEPLIGFKIMMIVL), 154–174 (LKYLIILVFVIPFSIDWNLII), 202–222 (FQLIFITIALLFTIVCTSVIF), 242–262 (GTAYISMSFIILVVFQFLFAF), and 271–291 (TIFGYSLLSYDILNVGSPIIM).

This sequence belongs to the nematode receptor-like protein srg family.

The protein resides in the membrane. The protein is Serpentine receptor class gamma-11 (srg-11) of Caenorhabditis elegans.